Here is an 853-residue protein sequence, read N- to C-terminus: A-kinase anchor protein 3 (853 aa).

Positions valine 124–alanine 137 are PKA-RII subunit binding domain. The segment at arginine 188 to phenylalanine 240 is disordered. 2 positions are modified to phosphoserine: serine 205 and serine 208. The span at lysine 219–proline 235 shows a compositional bias: basic and acidic residues. Serine 403 is modified (phosphoserine). Tyrosine 404 is modified (phosphotyrosine). A phosphoserine mark is found at serine 635 and serine 636.

The protein belongs to the AKAP110 family. In terms of assembly, interacts with ROPN1 and ROPN1L. Interacts with QRICH2. Post-translationally, phosphorylated by STK33 during sperm flagella assembly. Phosphorylated on tyrosine residues. In terms of tissue distribution, testis specific; only expressed in spermatids.

The protein resides in the cytoplasmic vesicle. Its subcellular location is the secretory vesicle. The protein localises to the acrosome. It localises to the cell projection. It is found in the cilium. The protein resides in the flagellum. Its function is as follows. Structural component of sperm fibrous sheath. Required for the formation of the subcellular structure of the sperm flagellum, sperm motility and male fertility. The chain is A-kinase anchor protein 3 from Homo sapiens (Human).